A 215-amino-acid polypeptide reads, in one-letter code: Histidine biosynthesis bifunctional protein HisIE (215 aa).

The segment at 1–126 is phosphoribosyl-AMP cyclohydrolase; sequence MSHSDLPLAN…GHKSPPPADM (126 aa). The phosphoribosyl-ATP pyrophosphohydrolase stretch occupies residues 127–215; it reads LTELARVIGD…VYRKLGDRRR (89 aa).

The protein in the N-terminal section; belongs to the PRA-CH family. It in the C-terminal section; belongs to the PRA-PH family.

It is found in the cytoplasm. It catalyses the reaction 1-(5-phospho-beta-D-ribosyl)-ATP + H2O = 1-(5-phospho-beta-D-ribosyl)-5'-AMP + diphosphate + H(+). The enzyme catalyses 1-(5-phospho-beta-D-ribosyl)-5'-AMP + H2O = 1-(5-phospho-beta-D-ribosyl)-5-[(5-phospho-beta-D-ribosylamino)methylideneamino]imidazole-4-carboxamide. It functions in the pathway amino-acid biosynthesis; L-histidine biosynthesis; L-histidine from 5-phospho-alpha-D-ribose 1-diphosphate: step 2/9. Its pathway is amino-acid biosynthesis; L-histidine biosynthesis; L-histidine from 5-phospho-alpha-D-ribose 1-diphosphate: step 3/9. This chain is Histidine biosynthesis bifunctional protein HisIE (hisI), found in Synechocystis sp. (strain ATCC 27184 / PCC 6803 / Kazusa).